Consider the following 434-residue polypeptide: Adenylosuccinate synthetase (434 aa).

GTP-binding positions include 25 to 31 and 53 to 55; these read GDEGKGK and GHT. Residue Asp26 is the Proton acceptor of the active site. Residues Asp26 and Gly53 each contribute to the Mg(2+) site. Residues 26–29, 51–54, Thr142, Arg156, Asn233, Thr248, and Arg312 each bind IMP; these read DEGK and NAGH. His54 (proton donor) is an active-site residue. 308 to 314 provides a ligand contact to substrate; sequence VTTGRKR. Residues Arg314, 340 to 342, and 422 to 424 each bind GTP; these read KLD and GVG.

This sequence belongs to the adenylosuccinate synthetase family. Homodimer. The cofactor is Mg(2+).

The protein localises to the cytoplasm. It catalyses the reaction IMP + L-aspartate + GTP = N(6)-(1,2-dicarboxyethyl)-AMP + GDP + phosphate + 2 H(+). It functions in the pathway purine metabolism; AMP biosynthesis via de novo pathway; AMP from IMP: step 1/2. Competitively Inhibited by GMP. Allosterically inhibited by AMP. In terms of biological role, plays an important role in the de novo pathway and in the salvage pathway of purine nucleotide biosynthesis. Catalyzes the first committed step in the biosynthesis of AMP from IMP. This is Adenylosuccinate synthetase (ade2) from Schizosaccharomyces pombe (strain 972 / ATCC 24843) (Fission yeast).